The following is a 204-amino-acid chain: Recombination protein RecR (204 aa).

A C4-type zinc finger spans residues 58 to 75 (CSVCQNVTDREEDPCSIC). The region spanning 83–181 (TVICVVESPV…EVTKIARGIP (99 aa)) is the Toprim domain.

It belongs to the RecR family.

Functionally, may play a role in DNA repair. It seems to be involved in an RecBC-independent recombinational process of DNA repair. It may act with RecF and RecO. The polypeptide is Recombination protein RecR (Chlorobium luteolum (strain DSM 273 / BCRC 81028 / 2530) (Pelodictyon luteolum)).